A 124-amino-acid polypeptide reads, in one-letter code: Large ribosomal subunit protein bL12 (124 aa).

The protein belongs to the bacterial ribosomal protein bL12 family. Homodimer. Part of the ribosomal stalk of the 50S ribosomal subunit. Forms a multimeric L10(L12)X complex, where L10 forms an elongated spine to which 2 to 4 L12 dimers bind in a sequential fashion. Binds GTP-bound translation factors.

In terms of biological role, forms part of the ribosomal stalk which helps the ribosome interact with GTP-bound translation factors. Is thus essential for accurate translation. The sequence is that of Large ribosomal subunit protein bL12 from Borreliella burgdorferi (strain ATCC 35210 / DSM 4680 / CIP 102532 / B31) (Borrelia burgdorferi).